A 399-amino-acid chain; its full sequence is Tryptophan synthase beta chain (399 aa).

Position 92 is an N6-(pyridoxal phosphate)lysine (Lys92).

It belongs to the TrpB family. Tetramer of two alpha and two beta chains. It depends on pyridoxal 5'-phosphate as a cofactor.

The enzyme catalyses (1S,2R)-1-C-(indol-3-yl)glycerol 3-phosphate + L-serine = D-glyceraldehyde 3-phosphate + L-tryptophan + H2O. It functions in the pathway amino-acid biosynthesis; L-tryptophan biosynthesis; L-tryptophan from chorismate: step 5/5. Its function is as follows. The beta subunit is responsible for the synthesis of L-tryptophan from indole and L-serine. The chain is Tryptophan synthase beta chain from Thiobacillus denitrificans (strain ATCC 25259 / T1).